The following is a 218-amino-acid chain: Elongation factor Ts (218 aa).

The segment at 82 to 85 (TDFV) is involved in Mg(2+) ion dislocation from EF-Tu.

This sequence belongs to the EF-Ts family.

Its subcellular location is the cytoplasm. Functionally, associates with the EF-Tu.GDP complex and induces the exchange of GDP to GTP. It remains bound to the aminoacyl-tRNA.EF-Tu.GTP complex up to the GTP hydrolysis stage on the ribosome. This chain is Elongation factor Ts, found in Prochlorococcus marinus (strain NATL2A).